The following is a 111-amino-acid chain: Probable 4-amino-4-deoxy-L-arabinose-phosphoundecaprenol flippase subunit ArnE (111 aa).

Helical transmembrane passes span 38–58, 61–81, and 91–111; these read LWLG…LLVL, LPVG…TLAA, and PRHW…GSAA. The EamA domain occupies 40 to 109; it reads LGLALICMGA…IISGIIILGS (70 aa).

It belongs to the ArnE family. As to quaternary structure, heterodimer of ArnE and ArnF.

It localises to the cell inner membrane. Its pathway is bacterial outer membrane biogenesis; lipopolysaccharide biosynthesis. Functionally, translocates 4-amino-4-deoxy-L-arabinose-phosphoundecaprenol (alpha-L-Ara4N-phosphoundecaprenol) from the cytoplasmic to the periplasmic side of the inner membrane. The sequence is that of Probable 4-amino-4-deoxy-L-arabinose-phosphoundecaprenol flippase subunit ArnE from Salmonella newport (strain SL254).